A 131-amino-acid chain; its full sequence is MLYELIGLVRITNSNAPKLEAKELSSTIGKLIIQNRGVVRDIVPMGIRYLPKIMKKDQEKHFRAYHFLMLFDSSAAVQSEILRTLKKDPRVIRSSIVKVDLDKQLDRASSLHRSLGKKSILELVNEDYQSI.

Belongs to the bacterial ribosomal protein bS6 family. Component of the mitochondrial small ribosomal subunit (mt-SSU). Mature yeast 74S mitochondrial ribosomes consist of a small (37S) and a large (54S) subunit. The 37S small subunit contains a 15S ribosomal RNA (15S mt-rRNA) and 34 different proteins. The 54S large subunit contains a 21S rRNA (21S mt-rRNA) and 46 different proteins.

It localises to the mitochondrion. Functionally, component of the mitochondrial ribosome (mitoribosome), a dedicated translation machinery responsible for the synthesis of mitochondrial genome-encoded proteins, including at least some of the essential transmembrane subunits of the mitochondrial respiratory chain. The mitoribosomes are attached to the mitochondrial inner membrane and translation products are cotranslationally integrated into the membrane. The protein is Small ribosomal subunit protein bS6m (MRP17) of Saccharomyces cerevisiae (strain ATCC 204508 / S288c) (Baker's yeast).